A 154-amino-acid chain; its full sequence is Proteinase inhibitor type-2 P303.51 (154 aa).

Residues M1–A25 form the signal peptide. Repeat copies occupy residues A31 to K87 and P88 to K147. 8 disulfide bridges follow: C34/C122, C38/C118, C46/C128, C58/C95, C61/C79, C62/C91, C68/C104, and C121/C139.

Belongs to the protease inhibitor I20 (potato type II proteinase inhibitor) family.

In Solanum tuberosum (Potato), this protein is Proteinase inhibitor type-2 P303.51.